Consider the following 130-residue polypeptide: Mitochondrial pyruvate carrier 1 (130 aa).

2 consecutive transmembrane segments (helical) span residues 23–45 and 55–77; these read LKYIFTTHFWGPVSNFGIPIAAI and ISGPMTFALVTYSGVFMKYALSV.

The protein belongs to the mitochondrial pyruvate carrier (MPC) (TC 2.A.105) family. In terms of assembly, the functional 150 kDa pyruvate import complex is a heteromer of MPC1 and either MPC2 or MPC3.

The protein localises to the mitochondrion. It localises to the mitochondrion inner membrane. Mediates the uptake of pyruvate into mitochondria. This chain is Mitochondrial pyruvate carrier 1, found in Saccharomyces cerevisiae (strain ATCC 204508 / S288c) (Baker's yeast).